Reading from the N-terminus, the 165-residue chain is Nucleotide-binding protein MXAN_1478 (165 aa).

Belongs to the YajQ family.

In terms of biological role, nucleotide-binding protein. This is Nucleotide-binding protein MXAN_1478 from Myxococcus xanthus (strain DK1622).